A 449-amino-acid polypeptide reads, in one-letter code: MPRLFGTDGVRGLANGETITADLALRLAQAAAHVLGQDARDAGRRPVAVVARDPRVSGEFIAAAVAAGLASSGVDVFDAGVIPTPATAYLIADFDADFGVMISASHNPAPDNGIKFFAAGGRKLADELEDRIEAQLSQPVLLPTGADVGRIRRFADAEDRYVLHLLGTLQHRLDGIHVVLDCAHGAAAGISPEVSTDAGARVTVIGNDPDGMNINDRVGSTHLDLLAEAVLGHGADVGIAYDGDADRCLAVDHTGAIIDGDQIMAVLALSMARRGLLVERTLVATVMSNLGLRIAMAENDITVLQTRVGDRYVLEAMNEGGYSLGGEQSGHLVIAEHATTGDGILTGIQLLGEMAATGRSLHELASVMTVYPQVMINVRGVDRERVSDDAELNAAVARAEAELGDTGRILMRASGTEPMIRVMVEAADQATAERHAQELAALVTERLAI.

Residue serine 105 is the Phosphoserine intermediate of the active site. Residues serine 105, aspartate 242, aspartate 244, and aspartate 246 each contribute to the Mg(2+) site. The residue at position 105 (serine 105) is a Phosphoserine.

Belongs to the phosphohexose mutase family. The cofactor is Mg(2+). In terms of processing, activated by phosphorylation.

The enzyme catalyses alpha-D-glucosamine 1-phosphate = D-glucosamine 6-phosphate. In terms of biological role, catalyzes the conversion of glucosamine-6-phosphate to glucosamine-1-phosphate. This is Phosphoglucosamine mutase from Clavibacter sepedonicus (Clavibacter michiganensis subsp. sepedonicus).